A 1075-amino-acid chain; its full sequence is Error-prone DNA polymerase (1075 aa).

This sequence belongs to the DNA polymerase type-C family. DnaE2 subfamily.

The protein resides in the cytoplasm. It carries out the reaction DNA(n) + a 2'-deoxyribonucleoside 5'-triphosphate = DNA(n+1) + diphosphate. Functionally, DNA polymerase involved in damage-induced mutagenesis and translesion synthesis (TLS). It is not the major replicative DNA polymerase. In Ralstonia nicotianae (strain ATCC BAA-1114 / GMI1000) (Ralstonia solanacearum), this protein is Error-prone DNA polymerase.